A 238-amino-acid polypeptide reads, in one-letter code: Probable transcriptional regulatory protein YeeN (238 aa).

It belongs to the TACO1 family. YeeN subfamily.

It localises to the cytoplasm. The protein is Probable transcriptional regulatory protein YeeN of Shigella flexneri.